Here is a 550-residue protein sequence, read N- to C-terminus: MAFNDLLQQVGGVGRFQQIQVTLVVLPLLLMASHNTLQNFTAAIPTHHCRPPADANLSKNGGLEVWLPRDRKGQPESCLRFTSPQWGPPFPNGTEANGTGATEPCTDGWIYDNSTFPSTIVTEWDLVCSHRALRQLAQSLYMVGVLLGAMVFGYLADRLGRRKVLILNYLQTAVSGTCTAFAPNFSIYCAFRLLSGMSLAGISLNCMTLNVEWMPIHTRACVGTLIGYVYSLGQFLLAGVAYAVPHWRHLQLLVSAPFFAFFIYSWFFIESARWHSSSGRLDLTLRALQRVARINGKREEGAKLSMEVLRASLQKELTMGKGQASAMELLRCPTLRHLFLCLSMLWFATSFAYYGLVMDLQGFGVSIYLIQVIFGAVDLPAKLVGFLVINSLGRRPAQMAALLLAGICILLNGVIPQDQSIVRTSLAVPGKGCLAASFNCIFLYTGELYPTMIRQTGMGMGSTMARVGSIVSPLVSMTAELYPSMPLFIYGAVPVAASAVTVLLPETLGQPLPDTVQDLESRKGKQTRQQQEHQKYMVPLQASAQEKNGL.

Topologically, residues 1 to 9 (MAFNDLLQQ) are cytoplasmic. The helical transmembrane segment at 10–30 (VGGVGRFQQIQVTLVVLPLLL) threads the bilayer. At 31 to 135 (MASHNTLQNF…LVCSHRALRQ (105 aa)) the chain is on the extracellular side. N-linked (GlcNAc...) asparagine glycosylation is found at Asn-39, Asn-92, and Asn-113. A helical transmembrane segment spans residues 136–156 (LAQSLYMVGVLLGAMVFGYLA). The Cytoplasmic portion of the chain corresponds to 157-164 (DRLGRRKV). Residues 165-187 (LILNYLQTAVSGTCTAFAPNFSI) form a helical membrane-spanning segment. The Extracellular segment spans residues 188–195 (YCAFRLLS). A helical transmembrane segment spans residues 196-216 (GMSLAGISLNCMTLNVEWMPI). The Cytoplasmic portion of the chain corresponds to 217–224 (HTRACVGT). A helical transmembrane segment spans residues 225–245 (LIGYVYSLGQFLLAGVAYAVP). Over 246–248 (HWR) the chain is Extracellular. A helical transmembrane segment spans residues 249-269 (HLQLLVSAPFFAFFIYSWFFI). The Cytoplasmic portion of the chain corresponds to 270 to 337 (ESARWHSSSG…ELLRCPTLRH (68 aa)). A helical membrane pass occupies residues 338–358 (LFLCLSMLWFATSFAYYGLVM). Residues 359-368 (DLQGFGVSIY) are Extracellular-facing. A helical membrane pass occupies residues 369-389 (LIQVIFGAVDLPAKLVGFLVI). Residues 390-395 (NSLGRR) are Cytoplasmic-facing. A helical transmembrane segment spans residues 396–416 (PAQMAALLLAGICILLNGVIP). The Extracellular portion of the chain corresponds to 417-420 (QDQS). The helical transmembrane segment at 421 to 444 (IVRTSLAVPGKGCLAASFNCIFLY) threads the bilayer. Topologically, residues 445–455 (TGELYPTMIRQ) are cytoplasmic. A helical transmembrane segment spans residues 456–475 (TGMGMGSTMARVGSIVSPLV). The Extracellular portion of the chain corresponds to 476–484 (SMTAELYPS). A helical membrane pass occupies residues 485-505 (MPLFIYGAVPVAASAVTVLLP). Over 506 to 550 (ETLGQPLPDTVQDLESRKGKQTRQQQEHQKYMVPLQASAQEKNGL) the chain is Cytoplasmic. Residues 514–550 (DTVQDLESRKGKQTRQQQEHQKYMVPLQASAQEKNGL) form a disordered region.

The protein belongs to the major facilitator (TC 2.A.1) superfamily. Organic cation transporter (TC 2.A.1.19) family. Post-translationally, glycosylated. Glycosylation is necessary for proper targeting of the transporter to the plasma membrane.

It localises to the cell membrane. The enzyme catalyses prostaglandin F2alpha(out) = prostaglandin F2alpha(in). The catalysed reaction is prostaglandin E2(out) = prostaglandin E2(in). Functionally, involved in the renal elimination of endogenous and exogenous organic anions. Functions as organic anion exchanger when the uptake of one molecule of organic anion is coupled with an efflux of one molecule of endogenous dicarboxylic acid (glutarate, ketoglutarate, etc). Mediates the transport of prostaglandin E2 (PGE2) and prostaglandin F2-alpha (PGF2-alpha) and may be involved in their renal excretion. Also mediates the sodium-independent uptake of p-aminohippurate (PAH), 2,3-dimercapto-1-propanesulfonic acid (DMPS), cidofovir, adefovir, 9-(2-phosphonylmethoxyethyl) guanine (PMEG), 9-(2-phosphonylmethoxyethyl) diaminopurine (PMEDAP), ochratoxin (OTA), acyclovir (ACV), 3'-azido-3-'deoxythymidine (AZT), cimetidine (CMD), 2,4-dichloro-phenoxyacetate (2,4-D), hippurate (HA), indoleacetate (IA), indoxyl sulfate (IS) and 3-carboxy-4-methyl-5-propyl-2-furanpropionate (CMPF) and edaravone sulfate. PAH uptake is inhibited by p-chloromercuribenzenesulphonate (PCMBS), diethyl pyrocarbonate (DEPC), indomethacin, sulindac, diclofenac, carprofen, okadaic acid, benzothiazolylcysteine (BTC), S-chlorotrifluoroethylcysteine (CTFC), cysteine S-conjugates S-dichlorovinylcysteine (DCVC), furosemide, steviol, phorbol 12-myristate 13-acetate (PMA), calcium ionophore A23187, benzylpenicillin, bumetamide, losartan, probenecid, phenol red, urate, glutarate and alpha-ketoglutarate. This chain is Solute carrier family 22 member 6 (SLC22A6), found in Pongo abelii (Sumatran orangutan).